The following is a 208-amino-acid chain: MTNVQRSRRQVRLSRALGIALTPKAQRIFEKRPYAPGEHGRDRRRTESDYAVRMREKQRLRAQYGISEKQLRAAYEKATRTAGQTGNAMLTDLETRLDNLVLRAGFARTTAQARQFVVHRHILVDGNIVDRPSYRVKPGQTIQVKAKSQTMVPFQIAAEGVHRDVLPAVPGYLDVNLPSLKATVTRKPEVEEIPVQVNIQYVVEFYAR.

Residues 30–49 are disordered; the sequence is EKRPYAPGEHGRDRRRTESD. The S4 RNA-binding domain maps to 95-161; it reads TRLDNLVLRA…VPFQIAAEGV (67 aa).

The protein belongs to the universal ribosomal protein uS4 family. As to quaternary structure, part of the 30S ribosomal subunit. Contacts protein S5. The interaction surface between S4 and S5 is involved in control of translational fidelity.

Functionally, one of the primary rRNA binding proteins, it binds directly to 16S rRNA where it nucleates assembly of the body of the 30S subunit. With S5 and S12 plays an important role in translational accuracy. The polypeptide is Small ribosomal subunit protein uS4 (Bifidobacterium longum (strain DJO10A)).